We begin with the raw amino-acid sequence, 510 residues long: ATP synthase subunit alpha (510 aa).

ATP is bound at residue 170-177 (GDRQTGKT).

Belongs to the ATPase alpha/beta chains family. As to quaternary structure, F-type ATPases have 2 components, CF(1) - the catalytic core - and CF(0) - the membrane proton channel. CF(1) has five subunits: alpha(3), beta(3), gamma(1), delta(1), epsilon(1). CF(0) has three main subunits: a(1), b(2) and c(9-12). The alpha and beta chains form an alternating ring which encloses part of the gamma chain. CF(1) is attached to CF(0) by a central stalk formed by the gamma and epsilon chains, while a peripheral stalk is formed by the delta and b chains.

It is found in the cell inner membrane. It catalyses the reaction ATP + H2O + 4 H(+)(in) = ADP + phosphate + 5 H(+)(out). Produces ATP from ADP in the presence of a proton gradient across the membrane. The alpha chain is a regulatory subunit. In Acidiphilium cryptum (strain JF-5), this protein is ATP synthase subunit alpha.